Here is a 345-residue protein sequence, read N- to C-terminus: MIETDRLIAPSTQGTQEEALECALRPKVLDEYVGQEKARGQLEIFINAARGRSEALDHVLLFGPPGLGKTTLAHIIAKEMGVNMRQTSGPVLERAGDLAALLTNLEPNDVLFIDEIHRLSPVVEEILYPAMEDYRLDIMIGEGPAARSVRLDLPPFTLVGATTRAGMLTNPLRDRFGIVSRLEFYTADELARIVHRSAGLLEVAIQQEGALEIARRSRGTPRIANRLLRRVRDYAQVKSDGVVSADIADAALKMLDVDKLGFDVMDRKLLLAVLEKFDGGPVGLDNLAAAIGEERDTIEDVLEPYLIQQGYLMRTPRGRIATQQAYQHFGLAIPGKIGTGELWQQ.

The interval 4 to 185 (TDRLIAPSTQ…FGIVSRLEFY (182 aa)) is large ATPase domain (RuvB-L). ATP is bound by residues L24, R25, G66, K69, T70, T71, 132 to 134 (EDY), R175, Y185, and R222. T70 is a binding site for Mg(2+). Residues 186–256 (TADELARIVH…IADAALKMLD (71 aa)) form a small ATPAse domain (RuvB-S) region. The tract at residues 259–345 (KLGFDVMDRK…KIGTGELWQQ (87 aa)) is head domain (RuvB-H). R295, R314, and R319 together coordinate DNA.

It belongs to the RuvB family. Homohexamer. Forms an RuvA(8)-RuvB(12)-Holliday junction (HJ) complex. HJ DNA is sandwiched between 2 RuvA tetramers; dsDNA enters through RuvA and exits via RuvB. An RuvB hexamer assembles on each DNA strand where it exits the tetramer. Each RuvB hexamer is contacted by two RuvA subunits (via domain III) on 2 adjacent RuvB subunits; this complex drives branch migration. In the full resolvosome a probable DNA-RuvA(4)-RuvB(12)-RuvC(2) complex forms which resolves the HJ.

It is found in the cytoplasm. It catalyses the reaction ATP + H2O = ADP + phosphate + H(+). Its function is as follows. The RuvA-RuvB-RuvC complex processes Holliday junction (HJ) DNA during genetic recombination and DNA repair, while the RuvA-RuvB complex plays an important role in the rescue of blocked DNA replication forks via replication fork reversal (RFR). RuvA specifically binds to HJ cruciform DNA, conferring on it an open structure. The RuvB hexamer acts as an ATP-dependent pump, pulling dsDNA into and through the RuvAB complex. RuvB forms 2 homohexamers on either side of HJ DNA bound by 1 or 2 RuvA tetramers; 4 subunits per hexamer contact DNA at a time. Coordinated motions by a converter formed by DNA-disengaged RuvB subunits stimulates ATP hydrolysis and nucleotide exchange. Immobilization of the converter enables RuvB to convert the ATP-contained energy into a lever motion, pulling 2 nucleotides of DNA out of the RuvA tetramer per ATP hydrolyzed, thus driving DNA branch migration. The RuvB motors rotate together with the DNA substrate, which together with the progressing nucleotide cycle form the mechanistic basis for DNA recombination by continuous HJ branch migration. Branch migration allows RuvC to scan DNA until it finds its consensus sequence, where it cleaves and resolves cruciform DNA. This chain is Holliday junction branch migration complex subunit RuvB, found in Methylobacillus flagellatus (strain ATCC 51484 / DSM 6875 / VKM B-1610 / KT).